Here is a 278-residue protein sequence, read N- to C-terminus: Large ribosomal subunit protein uL2c (278 aa).

A disordered region spans residues 224–256 (NPVDHPHGGGEGRAPIGRKKPTTPWGYPALGRK).

Belongs to the universal ribosomal protein uL2 family. In terms of assembly, part of the 50S ribosomal subunit.

It localises to the plastid. This is Large ribosomal subunit protein uL2c (rpl2) from Cuscuta exaltata (Tall dodder).